A 239-amino-acid polypeptide reads, in one-letter code: Large ribosomal subunit protein mL67 (239 aa).

This sequence belongs to the mitochondrion-specific ribosomal protein mL67 family. As to quaternary structure, component of the mitochondrial large ribosomal subunit (mt-LSU).

Its subcellular location is the nucleus. The protein resides in the mitochondrion. In terms of biological role, component of the mitochondrial ribosome (mitoribosome), a dedicated translation machinery responsible for the synthesis of mitochondrial genome-encoded proteins, including at least some of the essential transmembrane subunits of the mitochondrial respiratory chain. The mitoribosomes are attached to the mitochondrial inner membrane and translation products are cotranslationally integrated into the membrane. mL67/MHR1 also has extraribosomal functions, being involved in regulation of mitochondrial DNA recombination, maintenance and repair, and generation of homoplasmic cells. mL67/MHR1 also acts as transcription factor involved in regulation of RNA polymerase II-dependent transcription. The sequence is that of Large ribosomal subunit protein mL67 (MHR1) from Candida albicans (strain SC5314 / ATCC MYA-2876) (Yeast).